The following is a 517-amino-acid chain: Bifunctional purine biosynthesis protein PurH (517 aa).

The MGS-like domain occupies Met-1–Thr-146.

It belongs to the PurH family.

It carries out the reaction (6R)-10-formyltetrahydrofolate + 5-amino-1-(5-phospho-beta-D-ribosyl)imidazole-4-carboxamide = 5-formamido-1-(5-phospho-D-ribosyl)imidazole-4-carboxamide + (6S)-5,6,7,8-tetrahydrofolate. It catalyses the reaction IMP + H2O = 5-formamido-1-(5-phospho-D-ribosyl)imidazole-4-carboxamide. Its pathway is purine metabolism; IMP biosynthesis via de novo pathway; 5-formamido-1-(5-phospho-D-ribosyl)imidazole-4-carboxamide from 5-amino-1-(5-phospho-D-ribosyl)imidazole-4-carboxamide (10-formyl THF route): step 1/1. The protein operates within purine metabolism; IMP biosynthesis via de novo pathway; IMP from 5-formamido-1-(5-phospho-D-ribosyl)imidazole-4-carboxamide: step 1/1. The chain is Bifunctional purine biosynthesis protein PurH from Prochlorococcus marinus (strain MIT 9313).